We begin with the raw amino-acid sequence, 304 residues long: Acetylglutamate kinase (304 aa).

Residues 82 to 83 (GG), Arg104, and Asn197 each bind substrate.

The protein belongs to the acetylglutamate kinase family. ArgB subfamily.

The protein localises to the cytoplasm. It catalyses the reaction N-acetyl-L-glutamate + ATP = N-acetyl-L-glutamyl 5-phosphate + ADP. It functions in the pathway amino-acid biosynthesis; L-arginine biosynthesis; N(2)-acetyl-L-ornithine from L-glutamate: step 2/4. In terms of biological role, catalyzes the ATP-dependent phosphorylation of N-acetyl-L-glutamate. This is Acetylglutamate kinase from Prochlorococcus marinus (strain SARG / CCMP1375 / SS120).